The primary structure comprises 142 residues: MESFLTEIQIRVLNLRKKGHTQEEIAHVMGTSRANISMVEKRARENIEKAKNTLNIYNDIIAPSKIKVEKGTDVFNIPNVIFSKSDEEEIHVNYSSLQIMEFINQNAKRYIKNRMVVEPFIITILQNGEIYVHDFEEEKAKN.

It belongs to the Tfx family.

Functionally, putative transcriptional regulator. The protein is Putative transcriptional regulatory protein Mevan_1098 of Methanococcus vannielii (strain ATCC 35089 / DSM 1224 / JCM 13029 / OCM 148 / SB).